The sequence spans 518 residues: Lycopene epsilon cyclase, chloroplastic (518 aa).

Position 100 to 128 (100 to 128) interacts with NAD(+); the sequence is LIVIGCGPAGMSLAAEAGKRGLSVGLIGP. 2 helical membrane passes run 435–455 and 469–489; these read FFLF…RIFF and FLGS…MFAI.

It belongs to the lycopene cyclase family. Expressed in leaves and roots. Detected in flower buds and lips.

The protein resides in the plastid. Its subcellular location is the chloroplast membrane. It carries out the reaction a carotenoid psi-end group = a carotenoid epsilon-end group. The protein operates within carotenoid biosynthesis; alpha-zeacarotene biosynthesis. It participates in carotenoid biosynthesis; delta-carotene biosynthesis. In terms of biological role, catalyzes the single epsilon-cyclization reaction which converts lycopene to delta-carotene and neurosporene to alpha-zeacarotene. Required for lutein biosynthesis. The protein is Lycopene epsilon cyclase, chloroplastic of Oncidium hybrid cultivar (Orchid).